The following is a 390-amino-acid chain: MASTEIMTINMGPQHPSTHGVLRLIVELDGEIIQKVTPHIGYLHRGIEKLSEHRTYHQTIPLTDRLDYLAPMSNNLGYVLAVEKLLGIDVPERAQVIRVIMAELTRLKSHLVWIACHALDIGAMTVFLYAFRERENIMDIYEMVSGARMTSNFFRVGGLSKDIPEGFTAAVREVLDTFPGHFDTYEGLLTKNTIWLQRTIGNGVISAEDAIDYGITGPALRGSGVDWDLRRDNPYSGYEKYDFKVPVGENCDTFDRYKVRLVEMRESVKIIRQALDSLKPGPVLADEPQICYPPKENVYNSIEGLIHHFKIASEGFSTPEGEVYQSVEAPKGELGYYLVSDGSTKPYRMRIRPPSFVNLQAIEKMAKGAMIADLVAVIGTLDIVLGEIDR.

It belongs to the complex I 49 kDa subunit family. In terms of assembly, NDH-1 is composed of 14 different subunits. Subunits NuoB, C, D, E, F, and G constitute the peripheral sector of the complex.

Its subcellular location is the cell inner membrane. The enzyme catalyses a quinone + NADH + 5 H(+)(in) = a quinol + NAD(+) + 4 H(+)(out). NDH-1 shuttles electrons from NADH, via FMN and iron-sulfur (Fe-S) centers, to quinones in the respiratory chain. The immediate electron acceptor for the enzyme in this species is believed to be ubiquinone. Couples the redox reaction to proton translocation (for every two electrons transferred, four hydrogen ions are translocated across the cytoplasmic membrane), and thus conserves the redox energy in a proton gradient. In Geotalea uraniireducens (strain Rf4) (Geobacter uraniireducens), this protein is NADH-quinone oxidoreductase subunit D.